The primary structure comprises 473 residues: Cysteine protease ATG4A (473 aa).

Residues 1–33 are disordered; the sequence is MTSLPGRGVSPSSSDPLCEGNAAPSSSSSGQDL. The Nucleophile role is filled by Cys-160. Active-site residues include Asp-357 and His-359.

It belongs to the peptidase C54 family. In terms of assembly, interacts with ATG8.

The protein localises to the cytoplasm. The enzyme catalyses [protein]-C-terminal L-amino acid-glycyl-phosphatidylethanolamide + H2O = [protein]-C-terminal L-amino acid-glycine + a 1,2-diacyl-sn-glycero-3-phosphoethanolamine. In terms of biological role, cysteine protease that plays a key role in autophagy by mediating both proteolytic activation and delipidation of ATG8 family proteins. The protease activity is required for proteolytic activation of ATG8 family proteins: cleaves the C-terminal amino acid of ATG8 proteins to reveal a C-terminal glycine. Exposure of the glycine at the C-terminus is essential for ATG8 proteins conjugation to phosphatidylethanolamine (PE) and insertion to membranes, which is necessary for autophagy. In addition to the protease activity, also mediates delipidation of PE-conjugated ATG8 proteins. This Oryza sativa subsp. indica (Rice) protein is Cysteine protease ATG4A (ATG4A).